Here is a 403-residue protein sequence, read N- to C-terminus: S-adenosylmethionine synthase (403 aa).

His-22 contributes to the ATP binding site. Asp-24 lines the Mg(2+) pocket. Glu-50 serves as a coordination point for K(+). Positions 63 and 107 each coordinate L-methionine. The segment at 107 to 117 (QSPDIAMGVDK) is flexible loop. ATP is bound by residues 182-184 (DAK), 248-249 (RF), Asp-257, 263-264 (RK), Ala-280, and Lys-284. Position 257 (Asp-257) interacts with L-methionine. Lys-288 contributes to the L-methionine binding site.

The protein belongs to the AdoMet synthase family. In terms of assembly, homotetramer; dimer of dimers. It depends on Mg(2+) as a cofactor. The cofactor is K(+).

It is found in the cytoplasm. The enzyme catalyses L-methionine + ATP + H2O = S-adenosyl-L-methionine + phosphate + diphosphate. It participates in amino-acid biosynthesis; S-adenosyl-L-methionine biosynthesis; S-adenosyl-L-methionine from L-methionine: step 1/1. Functionally, catalyzes the formation of S-adenosylmethionine (AdoMet) from methionine and ATP. The overall synthetic reaction is composed of two sequential steps, AdoMet formation and the subsequent tripolyphosphate hydrolysis which occurs prior to release of AdoMet from the enzyme. This is S-adenosylmethionine synthase from Chloroflexus aurantiacus (strain ATCC 29366 / DSM 635 / J-10-fl).